The chain runs to 189 residues: Segregation and condensation protein B (189 aa).

It belongs to the ScpB family. In terms of assembly, homodimer. Homodimerization may be required to stabilize the binding of ScpA to the Smc head domains. Component of a cohesin-like complex composed of ScpA, ScpB and the Smc homodimer, in which ScpA and ScpB bind to the head domain of Smc. The presence of the three proteins is required for the association of the complex with DNA.

Its subcellular location is the cytoplasm. Its function is as follows. Participates in chromosomal partition during cell division. May act via the formation of a condensin-like complex containing Smc and ScpA that pull DNA away from mid-cell into both cell halves. This chain is Segregation and condensation protein B, found in Clostridium tetani (strain Massachusetts / E88).